The following is a 191-amino-acid chain: Thymidine kinase (191 aa).

Residues 15–22 and 88–91 contribute to the ATP site; these read GPMYSGKT and DEAQ. Glu89 serves as the catalytic Proton acceptor. Zn(2+)-binding residues include Cys145, Cys148, Cys183, and Cys186.

Belongs to the thymidine kinase family. As to quaternary structure, homotetramer.

Its subcellular location is the cytoplasm. The catalysed reaction is thymidine + ATP = dTMP + ADP + H(+). This Clostridium botulinum (strain Loch Maree / Type A3) protein is Thymidine kinase.